A 187-amino-acid polypeptide reads, in one-letter code: MAIISSLANHLLIAMPSLKDPNFERSVVYLCEHNEQGSVGLIINRPLQFPLSIVFEQLQIEPIRVEKNGLPLLFGGPVQPERGFVIHKQMGGWRSSLFLQDEVTVTTSNDIIRAIAYDEGPKDVLITLGYAAWTEQQLEREIMSNTWLVCPYKSEILYEVPFEERWEYAGLTLGIKMNQLSSDAGHA.

It belongs to the UPF0301 (AlgH) family.

The sequence is that of UPF0301 protein LPC_2717 from Legionella pneumophila (strain Corby).